The primary structure comprises 318 residues: Ribose-phosphate pyrophosphokinase 1 (318 aa).

96–101 (RQDKKD) is a binding site for ATP. Positions 128, 130, 139, and 143 each coordinate Mg(2+). His-130 is a binding site for ATP. The tract at residues 212–227 (KDRVAILVDDMADTCG) is binding of phosphoribosylpyrophosphate.

The protein belongs to the ribose-phosphate pyrophosphokinase family. Homodimer. The active form is probably a hexamer composed of 3 homodimers. Mg(2+) serves as cofactor.

It carries out the reaction D-ribose 5-phosphate + ATP = 5-phospho-alpha-D-ribose 1-diphosphate + AMP + H(+). The protein operates within metabolic intermediate biosynthesis; 5-phospho-alpha-D-ribose 1-diphosphate biosynthesis; 5-phospho-alpha-D-ribose 1-diphosphate from D-ribose 5-phosphate (route I): step 1/1. Its activity is regulated as follows. Activated by magnesium and inorganic phosphate. Its function is as follows. Catalyzes the synthesis of phosphoribosylpyrophosphate (PRPP) that is essential for nucleotide synthesis. This is Ribose-phosphate pyrophosphokinase 1 (PRPS1) from Bos taurus (Bovine).